The following is a 519-amino-acid chain: ATP synthase subunit beta (519 aa).

The segment covering 1–26 has biased composition (low complexity); that stretch reads MAKAATPKRAPARAAAIPAAATPAAK. Residues 1–40 form a disordered region; the sequence is MAKAATPKRAPARAAAIPAAATPAAKPAKRASTRSAAARS. 197-204 lines the ATP pocket; that stretch reads GGAGVGKT.

This sequence belongs to the ATPase alpha/beta chains family. As to quaternary structure, F-type ATPases have 2 components, CF(1) - the catalytic core - and CF(0) - the membrane proton channel. CF(1) has five subunits: alpha(3), beta(3), gamma(1), delta(1), epsilon(1). CF(0) has three main subunits: a(1), b(2) and c(9-12). The alpha and beta chains form an alternating ring which encloses part of the gamma chain. CF(1) is attached to CF(0) by a central stalk formed by the gamma and epsilon chains, while a peripheral stalk is formed by the delta and b chains.

The protein resides in the cell inner membrane. It carries out the reaction ATP + H2O + 4 H(+)(in) = ADP + phosphate + 5 H(+)(out). In terms of biological role, produces ATP from ADP in the presence of a proton gradient across the membrane. The catalytic sites are hosted primarily by the beta subunits. This Chelativorans sp. (strain BNC1) protein is ATP synthase subunit beta.